The following is a 71-amino-acid chain: MRGIILALLLAIAGSERTQIEPVFSESKTSVYNYEAVILNGFPESGLSRAGIKINCKVEISAYAQRSYFLK.

The signal sequence occupies residues 1-15; sequence MRGIILALLLAIAGS. The Vitellogenin domain maps to 24 to 71; sequence FSESKTSVYNYEAVILNGFPESGLSRAGIKINCKVEISAYAQRSYFLK.

As to expression, produced by the liver, secreted into the blood and then sequestered by receptor mediated endocytosis into growing oocytes, where it is generally cleaved, giving rise to the respective yolk components.

Precursor of the major egg-yolk proteins that are sources of nutrients during early development of oviparous organisms. This Xenopus laevis (African clawed frog) protein is Vitellogenin-A1.